A 335-amino-acid chain; its full sequence is Peflin (335 aa).

Positions 23 to 37 (AMEETRREFEKEKQR) are enriched in basic and acidic residues. Residues 23–92 (AMEETRREFE…SPRHTKTPVD (70 aa)) form a disordered region. Residues 43–53 (VTQAQTPNTRV) are compositionally biased toward polar residues. EF-hand domains follow at residues 144–192 (KVAP…DDNS), 198–223 (SVDALINLFGASRFGTVNQAEFIALY), 224–259 (KRVKSWRKVYVDNDINGSLTISVSEFHNSLQELGYL), 260–300 (IPFE…LMRL), and 301–332 (TKLFRKFDTNQEGIATIQYKDFIDATLYLGRF). The Ca(2+) site is built by aspartate 170, arginine 176, and glutamate 181. Residues aspartate 237, asparagine 239, serine 241, threonine 243, and glutamate 248 each coordinate Ca(2+).

Homodimer.

Its subcellular location is the cytoplasm. The protein localises to the nucleus. It is found in the bud tip. It localises to the bud neck. In terms of biological role, calcium-binding protein that is required for polar bud growth and cell wall abscission. Can also bind zinc ions. This Saccharomyces cerevisiae (strain ATCC 204508 / S288c) (Baker's yeast) protein is Peflin (PEF1).